Consider the following 133-residue polypeptide: Small ribosomal subunit protein uS8 (133 aa).

The protein belongs to the universal ribosomal protein uS8 family. In terms of assembly, part of the 30S ribosomal subunit. Contacts proteins S5 and S12.

Functionally, one of the primary rRNA binding proteins, it binds directly to 16S rRNA central domain where it helps coordinate assembly of the platform of the 30S subunit. This chain is Small ribosomal subunit protein uS8, found in Micrococcus luteus (Micrococcus lysodeikticus).